The sequence spans 506 residues: Ribose import ATP-binding protein RbsA (506 aa).

2 consecutive ABC transporter domains span residues 5–241 and 254–498; these read LALT…VGRR and RDAA…TSDV. An ATP-binding site is contributed by 37–44; the sequence is GENGAGKS.

This sequence belongs to the ABC transporter superfamily. Ribose importer (TC 3.A.1.2.1) family. In terms of assembly, the complex is composed of an ATP-binding protein (RbsA), two transmembrane proteins (RbsC) and a solute-binding protein (RbsB).

Its subcellular location is the cell inner membrane. The enzyme catalyses D-ribose(out) + ATP + H2O = D-ribose(in) + ADP + phosphate + H(+). Functionally, part of the ABC transporter complex RbsABC involved in ribose import. Responsible for energy coupling to the transport system. In Burkholderia mallei (strain ATCC 23344), this protein is Ribose import ATP-binding protein RbsA.